A 593-amino-acid chain; its full sequence is Aspartate--tRNA(Asp/Asn) ligase (593 aa).

Residue glutamate 173 coordinates L-aspartate. An aspartate region spans residues 197–200; sequence QLFK. Position 219 (arginine 219) interacts with L-aspartate. Residues 219–221 and glutamine 228 contribute to the ATP site; that span reads RDE. Position 451 (histidine 451) interacts with L-aspartate. Glutamate 485 serves as a coordination point for ATP. Arginine 492 is a binding site for L-aspartate. Residue 537–540 coordinates ATP; it reads GIDR.

It belongs to the class-II aminoacyl-tRNA synthetase family. Type 1 subfamily. In terms of assembly, homodimer.

It localises to the cytoplasm. The enzyme catalyses tRNA(Asx) + L-aspartate + ATP = L-aspartyl-tRNA(Asx) + AMP + diphosphate. Its function is as follows. Aspartyl-tRNA synthetase with relaxed tRNA specificity since it is able to aspartylate not only its cognate tRNA(Asp) but also tRNA(Asn). Reaction proceeds in two steps: L-aspartate is first activated by ATP to form Asp-AMP and then transferred to the acceptor end of tRNA(Asp/Asn). The protein is Aspartate--tRNA(Asp/Asn) ligase of Legionella pneumophila subsp. pneumophila (strain Philadelphia 1 / ATCC 33152 / DSM 7513).